Here is a 449-residue protein sequence, read N- to C-terminus: Naphthalene 1,2-dioxygenase system, large oxygenase component (449 aa).

Positions 39 to 137 constitute a Rieske domain; sequence WLFLTHDSLI…LNKKCLGLKE (99 aa). [2Fe-2S] cluster contacts are provided by C81, H83, C101, and H104. Residues H208, H213, and D362 each contribute to the Fe cation site.

Belongs to the bacterial ring-hydroxylating dioxygenase alpha subunit family. The naphthalene dioxygenase (NDO) multicomponent enzyme system is composed of an electron transfer component and a dioxygenase component (iron sulfur protein (ISP)). The electron transfer component is composed of a ferredoxin reductase (NdoR) and a ferredoxin (NdoA), and the dioxygenase component is formed of a heterohexamer (trimer of heterodimers) of three large alpha subunits (NdoB) and three small beta subunits (NdoC). The cofactor is [2Fe-2S] cluster. Fe(2+) is required as a cofactor.

It catalyses the reaction naphthalene + NADH + O2 + H(+) = (1R,2S)-1,2-dihydronaphthalene-1,2-diol + NAD(+). It participates in aromatic compound metabolism; naphthalene degradation. Component of the naphthalene dioxygenase (NDO) multicomponent enzyme system which catalyzes the incorporation of both atoms of molecular oxygen into naphthalene to form cis-(1R,2S)-dihydroxy-1,2-dihydronaphthalene. The alpha subunit has a catalytic role in the holoenzyme. The chain is Naphthalene 1,2-dioxygenase system, large oxygenase component from Pseudomonas fluorescens.